The sequence spans 646 residues: Long-chain fatty acid transport protein 1 (646 aa).

The Extracellular portion of the chain corresponds to 1 to 13; it reads MRAPGAGAASVVS. A helical transmembrane segment spans residues 14 to 34; that stretch reads LALLWLLGLPWTWSAAAALGV. Over 35–646 the chain is Cytoplasmic; it reads YVGSGGWRFL…TRICSGAFAL (612 aa). A sufficient for oligomerization region spans residues 191-475; it reads EVSGHLGKSL…YVSESATSKK (285 aa). 246 to 257 contributes to the AMP binding site; sequence YIYTSGTTGLPK.

The protein belongs to the ATP-dependent AMP-binding enzyme family. Self-associates. May function as a homodimer. Interacts with EPRS1; mediates the translocation of SLC27A1 from the cytoplasm to the plasma membrane thereby increasing the uptake of long-chain fatty acids. Interacts with DGAT2 and this interaction is enhanced in the presence of ZFYVE1. In terms of tissue distribution, highest levels of expression are detected in muscle and adipose tissue small, intermediate levels in small intestine, and barely detectable in liver. Expressed in brain gray matter.

It is found in the cell membrane. The protein resides in the endomembrane system. Its subcellular location is the cytoplasm. The enzyme catalyses a fatty acid(in) = a fatty acid(out). It carries out the reaction (9Z)-octadecenoate(out) = (9Z)-octadecenoate(in). It catalyses the reaction hexadecanoate(out) = hexadecanoate(in). The catalysed reaction is (9Z,12Z)-octadecadienoate(out) = (9Z,12Z)-octadecadienoate(in). The enzyme catalyses (5Z,8Z,11Z,14Z)-eicosatetraenoate(out) = (5Z,8Z,11Z,14Z)-eicosatetraenoate(in). It carries out the reaction a long-chain fatty acid + ATP + CoA = a long-chain fatty acyl-CoA + AMP + diphosphate. It catalyses the reaction (5Z,8Z,11Z,14Z)-eicosatetraenoate + ATP + CoA = (5Z,8Z,11Z,14Z)-eicosatetraenoyl-CoA + AMP + diphosphate. The catalysed reaction is a very long-chain fatty acid + ATP + CoA = a very long-chain fatty acyl-CoA + AMP + diphosphate. The enzyme catalyses tetracosanoate + ATP + CoA = tetracosanoyl-CoA + AMP + diphosphate. With respect to regulation, inhibited by Triacsin C. Mediates the import of long-chain fatty acids (LCFA) into the cell by facilitating their transport at the plasma membrane. Also functions as an acyl-CoA ligase catalyzing the ATP-dependent formation of fatty acyl-CoA using LCFA and very-long-chain fatty acids (VLCFA) as substrates, which prevents fatty acid efflux from cells and might drive more fatty acid uptake. May act directly as a bona fide transporter, or alternatively, in a cytoplasmic or membrane-associated multimeric protein complex to trap and draw fatty acids towards accumulation. Plays a pivotal role in regulating available LCFA substrates from exogenous sources in tissues undergoing high levels of beta-oxidation or triglyceride synthesis. May be involved in regulation of cholesterol metabolism. Probably involved in fatty acid transport across the blood barrier. The polypeptide is Long-chain fatty acid transport protein 1 (Homo sapiens (Human)).